Here is an 852-residue protein sequence, read N- to C-terminus: Probable inorganic carbon transporter subunit DabA (852 aa).

Zn(2+) contacts are provided by cysteine 370, aspartate 372, histidine 554, and cysteine 569.

The protein belongs to the inorganic carbon transporter (TC 9.A.2) DabA family. In terms of assembly, forms a complex with DabB. It depends on Zn(2+) as a cofactor.

It is found in the cell inner membrane. In terms of biological role, part of an energy-coupled inorganic carbon pump. In Novosphingobium aromaticivorans (strain ATCC 700278 / DSM 12444 / CCUG 56034 / CIP 105152 / NBRC 16084 / F199), this protein is Probable inorganic carbon transporter subunit DabA.